The primary structure comprises 534 residues: CTP synthase (534 aa).

An amidoligase domain region spans residues 1–267; the sequence is MTKYIFVTGG…GDLIIERLAL (267 aa). CTP is bound at residue Ser-13. Ser-13 lines the UTP pocket. 14–19 contributes to the ATP binding site; sequence SVGKGI. Tyr-54 contributes to the L-glutamine binding site. Asp-71 contributes to the ATP binding site. Mg(2+) contacts are provided by Asp-71 and Glu-141. CTP is bound by residues 148 to 150, 188 to 193, and Lys-224; these read DIE and KTKPTQ. UTP is bound by residues 188 to 193 and Lys-224; that span reads KTKPTQ. Residues 292–534 form the Glutamine amidotransferase type-1 domain; it reads TVAIVGKYVE…VQAALEQIAE (243 aa). Residue Gly-354 participates in L-glutamine binding. Cys-381 acts as the Nucleophile; for glutamine hydrolysis in catalysis. Residues 382 to 385, Glu-405, and Arg-462 each bind L-glutamine; that span reads LGMQ. Catalysis depends on residues His-507 and Glu-509.

Belongs to the CTP synthase family. In terms of assembly, homotetramer.

It catalyses the reaction UTP + L-glutamine + ATP + H2O = CTP + L-glutamate + ADP + phosphate + 2 H(+). The catalysed reaction is L-glutamine + H2O = L-glutamate + NH4(+). The enzyme catalyses UTP + NH4(+) + ATP = CTP + ADP + phosphate + 2 H(+). It participates in pyrimidine metabolism; CTP biosynthesis via de novo pathway; CTP from UDP: step 2/2. With respect to regulation, allosterically activated by GTP, when glutamine is the substrate; GTP has no effect on the reaction when ammonia is the substrate. The allosteric effector GTP functions by stabilizing the protein conformation that binds the tetrahedral intermediate(s) formed during glutamine hydrolysis. Inhibited by the product CTP, via allosteric rather than competitive inhibition. In terms of biological role, catalyzes the ATP-dependent amination of UTP to CTP with either L-glutamine or ammonia as the source of nitrogen. Regulates intracellular CTP levels through interactions with the four ribonucleotide triphosphates. The polypeptide is CTP synthase (Herpetosiphon aurantiacus (strain ATCC 23779 / DSM 785 / 114-95)).